The primary structure comprises 130 residues: Small ribosomal subunit protein uS8 (130 aa).

It belongs to the universal ribosomal protein uS8 family. Part of the 30S ribosomal subunit. Contacts proteins S5 and S12.

Its function is as follows. One of the primary rRNA binding proteins, it binds directly to 16S rRNA central domain where it helps coordinate assembly of the platform of the 30S subunit. In Aeromonas salmonicida (strain A449), this protein is Small ribosomal subunit protein uS8.